A 233-amino-acid chain; its full sequence is RNA/RNP complex-1-interacting phosphatase homolog (233 aa).

Over residues 1–14 the composition is skewed to basic residues; sequence MSNYHHNHNYQHRP. The interval 1 to 21 is disordered; sequence MSNYHHNHNYQHRPRGYERLP. The 173-residue stretch at 34–206 folds into the Tyrosine-protein phosphatase domain; it reads NVGRDIDGTR…LYEAERKKKY (173 aa). Residue cysteine 150 is the Phosphocysteine intermediate of the active site. Residue 151 to 156 coordinates substrate; it reads THGLNR. Catalysis depends on arginine 156, which acts as the Proton donor/acceptor. A disordered region spans residues 204–233; sequence KKYGKSSGKSSGNSADSTISSEQLHRNNSQ. The span at 208-217 shows a compositional bias: low complexity; that stretch reads KSSGKSSGNS. A compositionally biased stretch (polar residues) spans 218 to 233; sequence ADSTISSEQLHRNNSQ.

The protein belongs to the protein-tyrosine phosphatase family. Non-receptor class dual specificity subfamily. As to quaternary structure, interacts with the ERI/DICER complex component dcr-1. Interacts with ERI/DICER complex components rrf-3 and isoform b of eri-1. Interacts with drh-3 and rde-8.

It localises to the cytoplasm. The protein localises to the nucleus. Functionally, RNA polyphosphatase which has RNA 5'-triphosphatase and diphosphatase activities. Displays poor protein-tyrosine phosphatase activity. Binds to 5'-triphosphorylated RNAs (also called ppp-RNAs). Dephosphorylates ppp-RNAs converting them to 5'-monophosphorylated RNAs (also called p-RNAs). During small-RNA-mediated gene-silencing or RNA interference (RNAi), involved in the dcr-1-mediated processing of an amplified dsRNA intermediate. This is most likely in association with several components of the ERI/DICER complex including dcr-1, eri-1 and rrf-3. Plays a role in the biogenesis of 26G small interfering RNAs (26G-siRNAs), which are a class of 26 nucleotide siRNAs that possess a guanine residue at the 5'-end, by dephosphorylating 5'-triphosphorylated 26G-siRNAs prior to their maturation by the ERI/DICER complex. Plays a role in the biogenesis of csr-1-bound 22G small interfering RNAs (22G-siRNAs), which are a class of 22 nucleotide siRNAs that possess a guanine residue at the 5'-end. Not required for the biogenesis of microRNAs (miRNA) or for the biogenesis of a class of 21 nucleotide PIWI-interacting RNAs (piRNAs) that possess a uracil residue at the 5'-end (also called 21U-RNAs). This is RNA/RNP complex-1-interacting phosphatase homolog from Caenorhabditis elegans.